We begin with the raw amino-acid sequence, 400 residues long: Dehydrogenase efuE (400 aa).

Residues 222–223 (AI), 303–305 (TAR), and Asp329 contribute to the NAD(+) site. Arg305 is an active-site residue. Glu334 is a catalytic residue. Residue His352 is the Proton donor of the active site. 352–355 (HLGG) is a binding site for NAD(+).

This sequence belongs to the D-isomer specific 2-hydroxyacid dehydrogenase family.

It functions in the pathway secondary metabolite biosynthesis; terpenoid biosynthesis. Dehydrogenase; part of the gene cluster that mediates the biosynthesis of enfumafungin, a glycosylated fernene-type triterpenoid with potent antifungal activity, mediated by its interaction with beta-1,3-glucan synthase and the fungal cell wall. The pathway begins with the terpene cyclase-glycosyl transferase fusion protein that most likely uses 2,3-oxidosqualene as substrate and catalyzes glycosylation immediately after cyclization. The fernene glycoside then could be processed by the desaturase efuI which catalyzes isomerization of a double bond established by efuA to form the core structure. The latter would then undergo a series of hydroxylations in unknown order at C-2, C-19, C-23 and C-25, which would be catalyzed by two of the three cytochrome P450 monooxygenases efuB, efuG or efuH. The hydroxy-group at C-25 becomes oxidized by the dehydrogenase efuE to enable a spontaneous, non-enzymatic hemiacetal formation with C-23. After hydroxylation at C-2, acetylation by the acetyltransferase efuC takes place. The final steps in enfumafungin biosynthesis require expansion of the 5-membered ring by lactonization via a Baeyer-Villiger reaction mediated by one of the BGC's cytochrome P450 monooxygenases (efuB, efuG or efuH) followed by ring cleavage. This type of reaction would establish a double bond between C-20 and C-21 which could be reduced by the reductase efuL to form the final product. This is Dehydrogenase efuE from Hormonema carpetanum.